A 614-amino-acid chain; its full sequence is Acetylcholinesterase (614 aa).

A signal peptide spans 1–31 (MRPPWYPLHTPSLASPLLFLLLSLLGGGARA). An intrachain disulfide couples C100 to C127. S234 functions as the Acyl-ester intermediate in the catalytic mechanism. A disulfide bond links C288 and C303. N296 carries N-linked (GlcNAc...) asparagine glycosylation. E365 (charge relay system) is an active-site residue. N381 carries an N-linked (GlcNAc...) asparagine glycan. C440 and C560 are joined by a disulfide. H478 acts as the Charge relay system in catalysis. A glycan (N-linked (GlcNAc...) asparagine) is linked at N495.

Belongs to the type-B carboxylesterase/lipase family. Homotetramer; composed of disulfide-linked homodimers. Catalytic forms H (GPI-anchor dimer) and T (asymmetric collagen-tailed), which differ in their C-terminus, account for all types of known ACHE forms. Interacts with PRIMA1. The interaction with PRIMA1 is required to anchor it to the basal lamina of cells and organize into tetramers. In terms of tissue distribution, has been found in central nervous system and muscle. Found in embryonic liver and spleen but not in adult liver.

The protein localises to the synapse. Its subcellular location is the secreted. It localises to the cell membrane. It catalyses the reaction acetylcholine + H2O = choline + acetate + H(+). In terms of biological role, terminates signal transduction at the neuromuscular junction by rapid hydrolysis of the acetylcholine released into the synaptic cleft. The sequence is that of Acetylcholinesterase (Ache) from Rattus norvegicus (Rat).